A 181-amino-acid polypeptide reads, in one-letter code: MGLSFAKLFSRLFAKKEMRILMVGLDAAGKTTILYKLKLGEIVTTIPTIGFNVETVEYKNISFTVWDVGGQDKIRPLWRHYFQNTQGLIFVVDSNDRDRVVEARDELHRMLNEDELRDAVLLVFANKQDLPNAMNAAEITDKLGLHSLRQRHWYIQSTCATSGEGLYEGLDWLSNNIAGKA.

The N-myristoyl glycine moiety is linked to residue G2. GTP is bound by residues 24–31, 67–71, and 126–129; these read GLDAAGKT, DVGGQ, and NKQD.

Belongs to the small GTPase superfamily. Arf family.

Its subcellular location is the golgi apparatus. With respect to regulation, activated by AGD10. In terms of biological role, GTP-binding protein involved in protein trafficking; may modulate vesicle budding and uncoating within the Golgi apparatus. The protein is ADP-ribosylation factor 2-A (ARF2-A) of Arabidopsis thaliana (Mouse-ear cress).